Here is a 509-residue protein sequence, read N- to C-terminus: Maturase K (509 aa).

Belongs to the intron maturase 2 family. MatK subfamily.

It is found in the plastid. The protein resides in the chloroplast. In terms of biological role, usually encoded in the trnK tRNA gene intron. Probably assists in splicing its own and other chloroplast group II introns. This is Maturase K from Pereskia aculeata (Barbados gooseberry).